The sequence spans 89 residues: uncharacterized protein (89 aa).

Positions 1 to 19 (MQLTKTQFVRCVFLLLANS) are cleaved as a signal peptide.

This is an uncharacterized protein from Sulfolobus islandicus filamentous virus (isolate Iceland/Hveragerdi) (SIFV).